The primary structure comprises 600 residues: NADH-quinone oxidoreductase subunit C/D (600 aa).

Residues 1–190 (MVNNMTDLTA…SPFELTKAKQ (190 aa)) are NADH dehydrogenase I subunit C. The tract at residues 214–600 (DFMFLNLGPN…IDFVMSDVDR (387 aa)) is NADH dehydrogenase I subunit D.

This sequence in the N-terminal section; belongs to the complex I 30 kDa subunit family. In the C-terminal section; belongs to the complex I 49 kDa subunit family. As to quaternary structure, NDH-1 is composed of 13 different subunits. Subunits NuoB, CD, E, F, and G constitute the peripheral sector of the complex.

It localises to the cell inner membrane. It catalyses the reaction a quinone + NADH + 5 H(+)(in) = a quinol + NAD(+) + 4 H(+)(out). Its function is as follows. NDH-1 shuttles electrons from NADH, via FMN and iron-sulfur (Fe-S) centers, to quinones in the respiratory chain. The immediate electron acceptor for the enzyme in this species is believed to be ubiquinone. Couples the redox reaction to proton translocation (for every two electrons transferred, four hydrogen ions are translocated across the cytoplasmic membrane), and thus conserves the redox energy in a proton gradient. This chain is NADH-quinone oxidoreductase subunit C/D, found in Escherichia coli (strain K12 / DH10B).